The sequence spans 558 residues: MLVANYSSDSEEQENSQSPNIQPLLHTENLAPAVVDNVKDDLIVSKGGNSRELARNVPVNEMVQPALGPANPFVTKEQDSIKNSITGYAEREYVPNFVFNQEYYANTHAIYGKRNFDDNEATTSTDLKRKSQKIKERREDPGDPSILEGDGAYKGPWAGYGSEQSSSPLEYSEYEEVESLDVKSEKDTESNNLGQNELLKEQLATPEVETHRSKEETILHKDRLFDYQNRSYMHVPNDVGINLSEEPGEQTCYIPKKHIFTWKGHTKGISCLRFFPISGHLLLSGSMDNQIKIWEVYHDRSLLRTFQGHARPIRDLSFSQDGRSFLSTSFDKTIKLWDTELGKCLNCFNSDRLTNCVKFQVDPDKPNEFLAGTADKRILQFDIRSPDIVQAYDHHLGGINSITFLENGKRFVTTSDDSSMRFWEYGTPVPIKFVADIAMHSMPRVALRPNGKSIACQSLDNCIYVYSAYEKYRQNKKKVFKGYSCSGYSLEVGFSPDGRFVFSGDSSGNACFWDWKTCKLMAKLPAHSGPVQSMAFHPQETSKVATSSIVDGSIKYWD.

2 disordered regions span residues 1–23 (MLVANYSSDSEEQENSQSPNIQP) and 117–197 (DDNE…GQNE). The segment covering 126 to 141 (DLKRKSQKIKERREDP) has biased composition (basic and acidic residues). The segment covering 162–171 (SEQSSSPLEY) has biased composition (low complexity). Residues 180–189 (LDVKSEKDTE) show a composition bias toward basic and acidic residues. WD repeat units lie at residues 264-304 (GHTK…SLLR), 308-349 (GHAR…NCFN), 351-391 (DRLT…IVQA), 394-433 (HHLGGINSITFLENGKRFVTTSDDSSMRFWEYGTPVPIKF), 437-476 (IAMHSMPRVALRPNGKSIACQSLDNCIYVYSAYEKYRQNK), 484-523 (SCSGYSLEVGFSPDGRFVFSGDSSGNACFWDWKTCKLMAK), and 526-558 (AHSGPVQSMAFHPQETSKVATSSIVDGSIKYWD).

Belongs to the 40S cdc5-associated complex (or cwf complex), a spliceosome sub-complex reminiscent of a late-stage spliceosome composed of the U2, U5 and U6 snRNAs and at least brr2, cdc5, cwf2/prp3, cwf3/syf1, cwf4/syf3, cwf5/ecm2, spp42/cwf6, cwf7/spf27, cwf8, cwf9, cwf10, cwf11, cwf12, prp45/cwf13, cwf14, cwf15, cwf16, cwf17, cwf18, cwf19, cwf20, cwf21, cwf22, cwf23, cwf24, cwf25, cwf26, cyp7/cwf27, cwf28, cwf29/ist3, lea1, msl1, prp5/cwf1, prp10, prp12/sap130, prp17, prp22, sap61, sap62, sap114, sap145, slu7, smb1, smd1, smd3, smf1, smg1 and syf2.

The protein localises to the nucleus. Its function is as follows. Functions in the second step of pre-mRNA splicing. Involved in splicing intron which are longer than 200 nucleotides. The polypeptide is Pre-mRNA-processing factor 17 (prp17) (Schizosaccharomyces pombe (strain 972 / ATCC 24843) (Fission yeast)).